The following is a 168-amino-acid chain: MGNFIDKTFTVIADILLKVLPASKQEKEAFSYYRAGMSAQSKGRYAEALQNYYEALQVEEDPYDRSYTLYNIGLIYGNTGKYTQALEFYHQALSLNANLPQALNNIAVIYHSQALRAQSLEEDEYIELSKELFDKAAEYWIQALKLAPDNYPGARNWLKVTGRLSDNN.

3 TPR repeats span residues 29–62 (AFSY…EEDP), 66–99 (SYTL…NANL), and 117–150 (AQSL…APDN).

The protein belongs to the Ycf3 family.

It is found in the plastid. Its subcellular location is the chloroplast thylakoid membrane. Essential for the assembly of the photosystem I (PSI) complex. May act as a chaperone-like factor to guide the assembly of the PSI subunits. The sequence is that of Photosystem I assembly protein Ycf3 from Phaeodactylum tricornutum (strain CCAP 1055/1).